The primary structure comprises 262 residues: Acyl-[acyl-carrier-protein]--UDP-N-acetylglucosamine O-acyltransferase (262 aa).

This sequence belongs to the transferase hexapeptide repeat family. LpxA subfamily. Homotrimer.

The protein resides in the cytoplasm. It carries out the reaction a (3R)-hydroxyacyl-[ACP] + UDP-N-acetyl-alpha-D-glucosamine = a UDP-3-O-[(3R)-3-hydroxyacyl]-N-acetyl-alpha-D-glucosamine + holo-[ACP]. It functions in the pathway glycolipid biosynthesis; lipid IV(A) biosynthesis; lipid IV(A) from (3R)-3-hydroxytetradecanoyl-[acyl-carrier-protein] and UDP-N-acetyl-alpha-D-glucosamine: step 1/6. In terms of biological role, involved in the biosynthesis of lipid A, a phosphorylated glycolipid that anchors the lipopolysaccharide to the outer membrane of the cell. In Vibrio atlanticus (strain LGP32) (Vibrio splendidus (strain Mel32)), this protein is Acyl-[acyl-carrier-protein]--UDP-N-acetylglucosamine O-acyltransferase.